A 201-amino-acid polypeptide reads, in one-letter code: Probable GTP-binding protein EngB (201 aa).

One can recognise an EngB-type G domain in the interval 25-199; that stretch reads HGIEIAFIGY…KSKLNFWYEK (175 aa). GTP contacts are provided by residues 33–40, 60–64, 78–81, 145–148, and 178–180; these read GYSNSGKS, GRTQL, DLPG, TKCD, and FSS. The Mg(2+) site is built by S40 and T62.

This sequence belongs to the TRAFAC class TrmE-Era-EngA-EngB-Septin-like GTPase superfamily. EngB GTPase family. It depends on Mg(2+) as a cofactor.

In terms of biological role, necessary for normal cell division and for the maintenance of normal septation. This Buchnera aphidicola subsp. Schizaphis graminum (strain Sg) protein is Probable GTP-binding protein EngB.